The primary structure comprises 371 residues: O-phospho-L-seryl-tRNA:Cys-tRNA synthase 1 (371 aa).

Residues 78-79 (AR), N183, and 206-208 (SGH) each bind pyridoxal 5'-phosphate. Position 209 is an N6-(pyridoxal phosphate)lysine (K209).

It belongs to the SepCysS family. Homodimer. Probably interacts with SepRS. Pyridoxal 5'-phosphate serves as cofactor.

It carries out the reaction O-phospho-L-seryl-tRNA(Cys) + hydrogen sulfide + H(+) = L-cysteinyl-tRNA(Cys) + phosphate. In terms of biological role, converts O-phospho-L-seryl-tRNA(Cys) (Sep-tRNA(Cys)) to L-cysteinyl-tRNA(Cys) (Cys-tRNA(Cys)). This Archaeoglobus fulgidus (strain ATCC 49558 / DSM 4304 / JCM 9628 / NBRC 100126 / VC-16) protein is O-phospho-L-seryl-tRNA:Cys-tRNA synthase 1.